A 161-amino-acid chain; its full sequence is MGERSSAKARLIDVELDETVGRAPPDVEHERAVAIFDLVEENTFHPVGDQAGGPYRLKISLIDSRLALSVTREGGDPVVTHMLSLTPFRRIVKDYFLVCESYYQAIRSATPSQIEAIDMGRRGLHNEGSQTLMDRLNGKIEVDFNTARRLFTLICVLHWRR.

This sequence belongs to the UPF0262 family.

This Chelativorans sp. (strain BNC1) protein is UPF0262 protein Meso_0189.